The primary structure comprises 507 residues: UDP-N-acetylglucosamine 1-carboxyvinyltransferase 1 (507 aa).

41 to 42 is a phosphoenolpyruvate binding site; it reads KN. Arg112 lines the UDP-N-acetyl-alpha-D-glucosamine pocket. Cys136 serves as the catalytic Proton donor. Residue Cys136 is modified to 2-(S-cysteinyl)pyruvic acid O-phosphothioketal. Residues 141 to 145, Asp328, and Leu350 contribute to the UDP-N-acetyl-alpha-D-glucosamine site; that span reads RPIDL.

This sequence belongs to the EPSP synthase family. MurA subfamily.

The protein localises to the cytoplasm. It carries out the reaction phosphoenolpyruvate + UDP-N-acetyl-alpha-D-glucosamine = UDP-N-acetyl-3-O-(1-carboxyvinyl)-alpha-D-glucosamine + phosphate. It functions in the pathway cell wall biogenesis; peptidoglycan biosynthesis. In terms of biological role, cell wall formation. Adds enolpyruvyl to UDP-N-acetylglucosamine. The polypeptide is UDP-N-acetylglucosamine 1-carboxyvinyltransferase 1 (Legionella pneumophila (strain Lens)).